Consider the following 144-residue polypeptide: Acylphosphatase-like protein MJ1331 (144 aa).

The 93-residue stretch at T8–T100 folds into the Acylphosphatase-like domain.

The chain is Acylphosphatase-like protein MJ1331 from Methanocaldococcus jannaschii (strain ATCC 43067 / DSM 2661 / JAL-1 / JCM 10045 / NBRC 100440) (Methanococcus jannaschii).